The following is a 758-amino-acid chain: Transmembrane E3 ubiquitin-protein ligase 1 (758 aa).

Positions 1–26 are cleaved as a signal peptide; it reads MEIDGNTLVFIIVILFLFFSSPGGDG. The Lumenal portion of the chain corresponds to 27–398; that stretch reads VSSQYEFNQL…YELKIMSIRK (372 aa). The chain crosses the membrane as a helical span at residues 399-419; the sequence is HLLFGIALFAAQIYLLLTQMH. Over 420 to 431 the chain is Cytoplasmic; that stretch reads HTNTPSMVNKIS. Residues 432-452 traverse the membrane as a helical segment; it reads FYCFSMINLVDGSLATLYFVA. Over 453-458 the chain is Lumenal; sequence ASVVPE. Residues 459–479 form a helical membrane-spanning segment; it reads LYLPLVISAFSCFILASIFEI. Residues 480-523 are Cytoplasmic-facing; sequence RYLISIYASQVNEQNVGIINLLRGNTGTYDENRPRPAFIPDEGS. Residues 524–544 form a helical membrane-spanning segment; that stretch reads IGGSLYGRFFFMLIIFTFLIL. The Lumenal segment spans residues 545–553; the sequence is SSTSWPRQL. The helical transmembrane segment at 554–574 threads the bilayer; that stretch reads RMVFEYILIFILNSYWIPQIF. The Cytoplasmic portion of the chain corresponds to 575–602; the sequence is RNAVKGIPSRRERARSSIGGNRSQNKMP. Residues 603–623 form a helical membrane-spanning segment; it reads LLWSFVIGTTIIRSLPVVYVF. Over 624-635 the chain is Lumenal; sequence TYSSNVFRHHKD. A helical membrane pass occupies residues 636–656; sequence VHFVVFLSLWLLFQISILYSQ. Residues 657–758 are Cytoplasmic-facing; the sequence is DVLGSRWFLP…PVCRSPLPPL (102 aa). Residues 699–752 form an RING-type; atypical zinc finger; it reads CAICMSDVPIYIEEIPETHKVDQHSYMVTPCNHVFHTSCLENWMNYKLQCPVCR.

In terms of assembly, component of the DSC E3 ligase complexes composed of at least TUL1, DSC2, DSC3, UBX3, CDC48 as well as VLD1 for the vacuole-localized complex or GLD1 for the Golgi/endosome-localized complex. Interacts with UBC4.

It is found in the golgi apparatus membrane. The catalysed reaction is S-ubiquitinyl-[E2 ubiquitin-conjugating enzyme]-L-cysteine + [acceptor protein]-L-lysine = [E2 ubiquitin-conjugating enzyme]-L-cysteine + N(6)-ubiquitinyl-[acceptor protein]-L-lysine.. It functions in the pathway protein modification; protein ubiquitination. In terms of biological role, catalytic component of the DSC E3 ubiquitin ligase complexes that tag proteins present in Golgi, endosome and vacuole membranes and function in protein homeostasis under non-stress conditions and support a role in protein quality control. Mediates ubiquitination of vacuolar proteins such as CPS1, PPN1, PEP12 and other proteins containing exposed hydrophilic residues within their transmembrane domains, leading to their sorting into internal vesicles in late endosomes. Targets also the unpalmitoylated endosomal SNARE TLG1 to the MVB pathway. This Saccharomyces cerevisiae (strain ATCC 204508 / S288c) (Baker's yeast) protein is Transmembrane E3 ubiquitin-protein ligase 1 (TUL1).